Here is a 320-residue protein sequence, read N- to C-terminus: ATPase H(+)-transporting accessory protein 2 (320 aa).

Residues 1-17 (MLRVFVIFSLFIAAINA) form the signal peptide. At 18–277 (SGEFTVLNRP…YGSDYPVIFN (260 aa)) the chain is on the lumenal side. Residues 278–298 (IILWFMVVFGLSLLAICYAIA) form a helical membrane-spanning segment. Over 299 to 320 (AMDPGRDSIIYRMTSTRIKKDN) the chain is Cytoplasmic. Residues 317–320 (KKDN) carry the Mediates retrograde transport to the ER motif.

As to quaternary structure, interacts with fz and fz2. Interacts (via N-terminus) with stan. As an accessory component of the multisubunit proton-transporting vacuolar (V)-ATPase protein pump, might interacts with VhaAC45. In terms of processing, proteolytically cleaved by a furin-like convertase in the trans-Golgi network to generate N- and C-terminal fragments. Cleavage is reduced in the fat body.

It is found in the cell membrane. It localises to the endoplasmic reticulum membrane. The protein resides in the vesicle. Its subcellular location is the apical cell membrane. The protein localises to the golgi apparatus membrane. It is found in the secreted. Multifunctional protein which functions as a transmembrane receptor in the planar cell polarity (PCP) and is involved in the assembly of the proton-transporting vacuolar (V)-ATPase protein pump. As transmembrane receptor mediates fz/PCP signaling through interaction with fz and stabilizes asymmetric PCP domains through its interaction with stan. Also mediates Wnt/beta-cat signaling through interaction with fz/fz2. Probably by controlling the assembly of the V-ATPase pump and thus the acidification of the endo-lysosomal system, plays a role in many neuronal processes including synapse morphology and synaptic transmission. In terms of biological role, stabilizes asymmetric Planar Cell Polarity (PCP) domains through its interaction with stan. This is ATPase H(+)-transporting accessory protein 2 from Drosophila melanogaster (Fruit fly).